The sequence spans 194 residues: MTAVQLIVGLGNPGPEYDQTRHNAGALFVERLAHAQGISLVAERKYFGLVGKFSHQGKDVRLLIPTTYMNRSGQSVAALAGFFRIPPDAILVAHDELDMPPGVAKLKTGGGHGGHNGLRDIIAQLGNQNSFHRLRLGIGHPGHSSLVSGYVLGRAPRSEQELLDTSIDFALGVLPEMLAGDWTRAMQKLHSQKA.

Y17 contacts tRNA. H22 acts as the Proton acceptor in catalysis. Residues Y68, N70, and N116 each coordinate tRNA.

The protein belongs to the PTH family. In terms of assembly, monomer.

It is found in the cytoplasm. It catalyses the reaction an N-acyl-L-alpha-aminoacyl-tRNA + H2O = an N-acyl-L-amino acid + a tRNA + H(+). Functionally, hydrolyzes ribosome-free peptidyl-tRNAs (with 1 or more amino acids incorporated), which drop off the ribosome during protein synthesis, or as a result of ribosome stalling. In terms of biological role, catalyzes the release of premature peptidyl moieties from peptidyl-tRNA molecules trapped in stalled 50S ribosomal subunits, and thus maintains levels of free tRNAs and 50S ribosomes. The polypeptide is Peptidyl-tRNA hydrolase (Pseudomonas paraeruginosa (strain DSM 24068 / PA7) (Pseudomonas aeruginosa (strain PA7))).